The sequence spans 849 residues: Aminopeptidase N (849 aa).

Substrate is bound by residues E122 and 259–263 (GAMEN). H294 provides a ligand contact to Zn(2+). The active-site Proton acceptor is E295. Zn(2+)-binding residues include H298 and E317.

It belongs to the peptidase M1 family. Monomer. The cofactor is Zn(2+).

The protein localises to the cytoplasm. It carries out the reaction Release of an N-terminal amino acid, Xaa-|-Yaa- from a peptide, amide or arylamide. Xaa is preferably Ala, but may be most amino acids including Pro (slow action). When a terminal hydrophobic residue is followed by a prolyl residue, the two may be released as an intact Xaa-Pro dipeptide.. Aminopeptidase with broad substrate specificity to several peptides. It has more affinity for oligopeptides than for dipeptides. It plays an essential role in the metabolism, it may be involved in nitrogen supply or protein turnover. The chain is Aminopeptidase N (pepN) from Lactococcus lactis subsp. lactis (Streptococcus lactis).